Consider the following 373-residue polypeptide: Spore coat polysaccharide biosynthesis protein SpsE (373 aa).

An AFP-like domain is found at 305–367 (GIFTTAPIQK…GIVWDDILLK (63 aa)).

Its pathway is spore coat biogenesis; spore coat polysaccharide biosynthesis. This Bacillus subtilis (strain 168) protein is Spore coat polysaccharide biosynthesis protein SpsE (spsE).